A 494-amino-acid polypeptide reads, in one-letter code: Protein nucleotidyltransferase YdiU (494 aa).

Residues Gly-101, Gly-103, Arg-104, Lys-123, Asp-135, Gly-136, Arg-186, and Arg-193 each coordinate ATP. Catalysis depends on Asp-262, which acts as the Proton acceptor. Mg(2+)-binding residues include Asn-263 and Asp-272. Asp-272 is an ATP binding site.

This sequence belongs to the SELO family. It depends on Mg(2+) as a cofactor. The cofactor is Mn(2+).

It carries out the reaction L-seryl-[protein] + ATP = 3-O-(5'-adenylyl)-L-seryl-[protein] + diphosphate. The enzyme catalyses L-threonyl-[protein] + ATP = 3-O-(5'-adenylyl)-L-threonyl-[protein] + diphosphate. It catalyses the reaction L-tyrosyl-[protein] + ATP = O-(5'-adenylyl)-L-tyrosyl-[protein] + diphosphate. The catalysed reaction is L-histidyl-[protein] + UTP = N(tele)-(5'-uridylyl)-L-histidyl-[protein] + diphosphate. It carries out the reaction L-seryl-[protein] + UTP = O-(5'-uridylyl)-L-seryl-[protein] + diphosphate. The enzyme catalyses L-tyrosyl-[protein] + UTP = O-(5'-uridylyl)-L-tyrosyl-[protein] + diphosphate. Functionally, nucleotidyltransferase involved in the post-translational modification of proteins. It can catalyze the addition of adenosine monophosphate (AMP) or uridine monophosphate (UMP) to a protein, resulting in modifications known as AMPylation and UMPylation. This Chromohalobacter salexigens (strain ATCC BAA-138 / DSM 3043 / CIP 106854 / NCIMB 13768 / 1H11) protein is Protein nucleotidyltransferase YdiU.